The primary structure comprises 785 residues: DNA ligase (785 aa).

NAD(+)-binding positions include 32 to 36, 81 to 82, and E121; these read DAEYD and SL. Residue K123 is the N6-AMP-lysine intermediate of the active site. Residues R144, E181, K294, and K318 each contribute to the NAD(+) site. Positions 412, 415, 442, and 448 each coordinate Zn(2+). The BRCT domain maps to 702–785; that stretch reads VEGLPEAGHT…AFLAKHNIPV (84 aa).

Belongs to the NAD-dependent DNA ligase family. LigA subfamily. The cofactor is Mg(2+). It depends on Mn(2+) as a cofactor.

The enzyme catalyses NAD(+) + (deoxyribonucleotide)n-3'-hydroxyl + 5'-phospho-(deoxyribonucleotide)m = (deoxyribonucleotide)n+m + AMP + beta-nicotinamide D-nucleotide.. Functionally, DNA ligase that catalyzes the formation of phosphodiester linkages between 5'-phosphoryl and 3'-hydroxyl groups in double-stranded DNA using NAD as a coenzyme and as the energy source for the reaction. It is essential for DNA replication and repair of damaged DNA. The chain is DNA ligase from Pseudomonas fluorescens (strain SBW25).